The following is an 85-amino-acid chain: Large ribosomal subunit protein bL27 (85 aa).

Residues 1–26 are disordered; sequence MAHKKAGGSTRNGRDSESKRLGVKRF.

Belongs to the bacterial ribosomal protein bL27 family.

The protein is Large ribosomal subunit protein bL27 of Saccharophagus degradans (strain 2-40 / ATCC 43961 / DSM 17024).